Consider the following 606-residue polypeptide: Pentatricopeptide repeat-containing protein At1g31920 (606 aa).

PPR repeat units follow at residues 96 to 130 (CTFDFNTMIRGYVNVMSFEEALCFYNEMMQRGNEP), 131 to 165 (DNFTYPCLLKACTRLKSIREGKQIHGQVFKLGLEA), 166 to 200 (DVFVQNSLINMYGRCGEMELSSAVFEKLESKTAAS), 201 to 227 (WSSMVSARAGMGMWSECLLLFRGMCSE), 233 to 263 (EESGMVSALLACANTGALNLGMSIHGFLLRN), 268 to 298 (NIIVQTSLVDMYVKCGCLDKALHIFQKMEKR), 299 to 333 (NNLTYSAMISGLALHGEGESALRMFSKMIKEGLEP), 334 to 368 (DHVVYVSVLNACSHSGLVKEGRRVFAEMLKEGKVE), and 370 to 404 (TAEHYGCLVDLLGRAGLLEEALETIQSIPIEKNDV). Residues 405–480 (IWRTFLSQCR…TPGFSIVELK (76 aa)) are type E motif. The segment at 481–511 (GKTHRFVSQDRSHPKCKEIYKMLHQMEWQLK) is type E(+) motif. Positions 512–606 (FEGYSPDLTQ…GGTCSCKDYW (95 aa)) are type DYW motif.

It belongs to the PPR family. PCMP-H subfamily.

This chain is Pentatricopeptide repeat-containing protein At1g31920 (PCMP-H11), found in Arabidopsis thaliana (Mouse-ear cress).